The following is an 809-amino-acid chain: Ribonuclease Z 1 (809 aa).

A disordered region spans residues 74 to 93 (ISSPDTYDSSSSSSTTSVSD).

Belongs to the RNase Z family. The cofactor is Zn(2+).

The protein localises to the nucleus. Its subcellular location is the cytoplasm. The catalysed reaction is Endonucleolytic cleavage of RNA, removing extra 3' nucleotides from tRNA precursor, generating 3' termini of tRNAs. A 3'-hydroxy group is left at the tRNA terminus and a 5'-phosphoryl group is left at the trailer molecule.. Zinc phosphodiesterase, which displays some tRNA 3'-processing endonuclease activity. May be involved in tRNA maturation, by removing a 3'-trailer from precursor tRNA. In Schizosaccharomyces pombe (strain 972 / ATCC 24843) (Fission yeast), this protein is Ribonuclease Z 1 (trz1).